We begin with the raw amino-acid sequence, 128 residues long: Ribonuclease P protein component (128 aa).

The protein belongs to the RnpA family. As to quaternary structure, consists of a catalytic RNA component (M1 or rnpB) and a protein subunit.

It carries out the reaction Endonucleolytic cleavage of RNA, removing 5'-extranucleotides from tRNA precursor.. In terms of biological role, RNaseP catalyzes the removal of the 5'-leader sequence from pre-tRNA to produce the mature 5'-terminus. It can also cleave other RNA substrates such as 4.5S RNA. The protein component plays an auxiliary but essential role in vivo by binding to the 5'-leader sequence and broadening the substrate specificity of the ribozyme. In Synechococcus sp. (strain CC9902), this protein is Ribonuclease P protein component.